A 308-amino-acid polypeptide reads, in one-letter code: Cysteine proteinase 3 (308 aa).

The N-terminal stretch at 1 to 13 (MFALILFVSLACA) is a signal peptide. A propeptide spans 14–92 (NEVAFKQWAA…TSNVKAAVKA (79 aa)) (activation peptide). Intrachain disulfides connect Cys112–Cys153 and Cys146–Cys186. Cys115 is a catalytic residue. Active-site residues include His251 and Asn271.

It belongs to the peptidase C1 family.

The protein resides in the cytoplasm. Its subcellular location is the cytoplasmic vesicle. It is found in the phagosome. The catalysed reaction is Hydrolysis of proteins, including basement membrane collagen and azocasein. Preferential cleavage: Arg-Arg-|-Xaa in small molecule substrates including Z-Arg-Arg-|-NHMec.. Functionally, cysteine protease which may be involved in pathogenicity. This chain is Cysteine proteinase 3, found in Entamoeba histolytica (strain ATCC 30459 / HM-1:IMSS / ABRM).